Consider the following 426-residue polypeptide: Ubiquitin carboxyl-terminal hydrolase 46 (426 aa).

Gly-2 is lipidated: N-myristoyl glycine. The USP domain maps to 27-406 (YGLVNFGNTC…SAYILFYQAR (380 aa)). The active-site Nucleophile is the Cys-36. The segment at 162 to 181 (TAGLPRSDEKGTSERNGGIT) is disordered. The active-site Proton acceptor is the His-342.

It belongs to the peptidase C19 family. In terms of assembly, interacts with wdr-20 and wdr-48; the catalytic activity of usp-46 is increased in the presence of both wdr-20 and wdr-48. Interacts with glr-1; the interaction results in deubiquitination of glr-1. Expressed in a number of tissues including the nervous system, pharynx, body wall muscle, vulva muscle and intestine and is detected in many head and ventral cord neurons.

It is found in the perikaryon. It localises to the cytoplasm. It catalyses the reaction Thiol-dependent hydrolysis of ester, thioester, amide, peptide and isopeptide bonds formed by the C-terminal Gly of ubiquitin (a 76-residue protein attached to proteins as an intracellular targeting signal).. Functionally, regulates the abundance of the glr-1 glutamate receptor in the ventral nerve cord by promoting its deubiquitination and preventing its degradation in the lysosome. Contributes to the regulation of embryonic polarity. The polypeptide is Ubiquitin carboxyl-terminal hydrolase 46 (usp-46) (Caenorhabditis elegans).